We begin with the raw amino-acid sequence, 308 residues long: uncharacterized protein (308 aa).

The N-terminal stretch at 1-17 (MKSLALLLSLLINFSIG) is a signal peptide. Asn-13, Asn-91, Asn-159, and Asn-210 each carry an N-linked (GlcNAc...) asparagine glycan. Positions 213-308 (DEISGGTGAG…HDNYISSFCT (96 aa)) are disordered. Composition is skewed to gly residues over residues 217–231 (GGTGAGDYSGTGSGS) and 239–252 (SDGGSSGSGSGSGS). The span at 267 to 284 (NKNNNKNKNNNNNNNNYN) shows a compositional bias: low complexity.

The protein resides in the secreted. This is an uncharacterized protein from Dictyostelium discoideum (Social amoeba).